The primary structure comprises 167 residues: MENIIEKIIYASRWLMFPVNIGLSFGFILLTLKFFQQIIFILPNILTMSESGLVLIVLSLIDIALVGGLLVMVMFSGYENFISKMDIKDDSKRLGWMGTMDVNSIKNKVASSIVAISSVHLLRLFMEAEKILDNKIILCVIIHLTFVLSAFGMAYIDKMSKKIKNKK.

3 consecutive transmembrane segments (helical) span residues 15 to 35 (LMFP…LKFF), 53 to 73 (LVLI…LVMV), and 136 to 156 (IILC…MAYI).

It belongs to the UPF0114 family.

Its subcellular location is the cell membrane. This is UPF0114 protein in repA1-repA2 intergenic region from Buchnera aphidicola subsp. Pterocomma populeum.